Reading from the N-terminus, the 488-residue chain is R3H and coiled-coil domain-containing protein 1 (488 aa).

The R3H domain maps to 16–81 (NDFVHRVQEE…KRRTVICHLD (66 aa)). Disordered regions lie at residues 87–180 (SDGP…GDAE) and 195–322 (KSPD…DADH). Low complexity predominate over residues 114–125 (GAAAGPRGAPAG). S232 is subject to Phosphoserine. The stretch at 244 to 321 (SHGMRSLVDQ…EEDEDEADAD (78 aa)) forms a coiled coil. Acidic residues predominate over residues 252–265 (DQEEEEIEGEEEEK). 2 stretches are compositionally biased toward basic and acidic residues: residues 266–280 (VDEKEEDTGKQKERV) and 287–301 (TDAQEGKVDSEGERM). The span at 302–319 (DEGEDKVDAEEEDEDEAD) shows a compositional bias: acidic residues.

The sequence is that of R3H and coiled-coil domain-containing protein 1 from Mus musculus (Mouse).